The primary structure comprises 79 residues: Exodeoxyribonuclease 7 small subunit (79 aa).

This sequence belongs to the XseB family. As to quaternary structure, heterooligomer composed of large and small subunits.

Its subcellular location is the cytoplasm. It carries out the reaction Exonucleolytic cleavage in either 5'- to 3'- or 3'- to 5'-direction to yield nucleoside 5'-phosphates.. Bidirectionally degrades single-stranded DNA into large acid-insoluble oligonucleotides, which are then degraded further into small acid-soluble oligonucleotides. The sequence is that of Exodeoxyribonuclease 7 small subunit from Shouchella clausii (strain KSM-K16) (Alkalihalobacillus clausii).